We begin with the raw amino-acid sequence, 494 residues long: Putative glucuronosyltransferase PGSIP7 (494 aa).

Residues 4–24 (QRTLMFSCWVLSLLIIKTTAY) traverse the membrane as a helical segment. Residues aspartate 161 and aspartate 163 each contribute to the Mn(2+) site. Transmembrane regions (helical) follow at residues 316–336 (YSAE…IILV), 362–382 (AFKF…FFII), 389–409 (LIGW…PINA), 410–430 (FLLP…TLLV), and 444–464 (LSVF…FVKI).

It belongs to the glycosyltransferase 8 family. Glycogenin subfamily. Mn(2+) serves as cofactor.

The protein resides in the membrane. This Arabidopsis thaliana (Mouse-ear cress) protein is Putative glucuronosyltransferase PGSIP7 (PGSIP7).